We begin with the raw amino-acid sequence, 993 residues long: Replication protein 1a (993 aa).

A methyltransferase region spans residues 50 to 409 (RNVLSVKDSE…TIVINGMSMQ (360 aa)). In terms of domain architecture, Alphavirus-like MT spans 72 to 290 (HLTQQEFAPH…HDWENIKSFL (219 aa)). The tract at residues 537–565 (LAQPVDEVSDSPEVPSSTPDDTADVCGKE) is disordered. The (+)RNA virus helicase ATP-binding domain maps to 687–838 (CVICNSESLS…KIIPDETSDA (152 aa)). The ATP-dependent helicase stretch occupies residues 712-975 (VDGVAGCGKT…LTRHKVTFRY (264 aa)). Residue 714-721 (GVAGCGKT) participates in ATP binding. In terms of domain architecture, (+)RNA virus helicase C-terminal spans 839 to 993 (DTTFRSPQDV…DLIAECIARA (155 aa)).

Belongs to the bromoviridae replication protein 1a family. Interacts with RNA-directed RNA polymerase 2a.

Its subcellular location is the host endoplasmic reticulum membrane. In terms of biological role, involved in the virus replication. Contains a helicase domain and a methyltransferase domain. The methyltransferase domain is probably involved in viral RNA capping. Involved in the formation of ER membrane spherular invaginations in which RNA replication complexes form. This is Replication protein 1a from Cucumber mosaic virus (strain O) (CMV).